Here is a 394-residue protein sequence, read N- to C-terminus: 2-oxoglutarate and iron-dependent oxygenase domain-containing protein CP2 (394 aa).

Residues 1–35 (MSSEQREGSQETTTTTVEGNGTIAGQNSHSAAPTT) form a disordered region. Positions 17–35 (VEGNGTIAGQNSHSAAPTT) are enriched in polar residues. The Fe2OG dioxygenase domain occupies 248–347 (DSHHGFVVEY…RVNMLLWCRS (100 aa)). 3 residues coordinate Fe cation: H268, D270, and H328. R338 contacts 2-oxoglutarate.

Requires Fe(2+) as cofactor. L-ascorbate serves as cofactor. As to expression, expressed in roots, cotyledons, rosette leaves, cauline leaves, inflorescences and siliques.

It is found in the nucleus. The protein resides in the nucleoplasm. Functionally, participates in the epigenetic repression of flowering genes in association with ICU11. Functions in the repression of several members of the MADS-box transcription factors family, including SEP3, during vegetative development via histone modification. The sequence is that of 2-oxoglutarate and iron-dependent oxygenase domain-containing protein CP2 from Arabidopsis thaliana (Mouse-ear cress).